The primary structure comprises 550 residues: Carboxylesterase 4A (550 aa).

A signal peptide spans 1-20 (MNWILCLSLTLLLVVQTAWG). Cys-88 and Cys-116 are disulfide-bonded. Ser-221 acts as the Acyl-ester intermediate in catalysis. Cys-273 and Cys-284 are disulfide-bonded. Residue Asn-276 is glycosylated (N-linked (GlcNAc...) asparagine). Glu-353 acts as the Charge relay system in catalysis. Residue Asn-386 is glycosylated (N-linked (GlcNAc...) asparagine). His-465 serves as the catalytic Charge relay system.

This sequence belongs to the type-B carboxylesterase/lipase family.

It is found in the secreted. Functionally, probable carboxylesterase. This Bos taurus (Bovine) protein is Carboxylesterase 4A (CES4A).